The chain runs to 255 residues: Protein patched homolog 2 (255 aa).

At Ser-1–Asp-197 the chain is on the extracellular side. N-linked (GlcNAc...) asparagine glycans are attached at residues Asn-147 and Asn-175. Residues Val-198–Met-218 form a helical membrane-spanning segment. Positions Ser-199 to Ser-255 constitute an SSD domain. Residues Leu-219–Gln-227 lie on the Cytoplasmic side of the membrane. Residues Gly-228–Leu-248 traverse the membrane as a helical segment. At Cys-249–Ser-255 the chain is on the extracellular side.

It belongs to the patched family. As to expression, in the eye, detected in neural retina, iris, retinal pigment epithelium, but not in lens.

The protein resides in the membrane. In terms of biological role, may act as a receptor for sonic hedgehog (SHH). This chain is Protein patched homolog 2 (PTC2), found in Cynops pyrrhogaster (Japanese fire-bellied newt).